The primary structure comprises 162 residues: Selenoprotein F (162 aa).

The signal sequence occupies residues 1 to 28 (MAAEPGGWLGPALGLRLLLATALQMVSA). A non-standard amino acid (selenocysteine) is located at residue selenocysteine 93.

It belongs to the selenoprotein M/F family. In terms of assembly, forms a tight complex with UGGT1/UGCGL1. Interacts with UGGT2/UGCGL2. Interacts with RDH11.

It localises to the endoplasmic reticulum lumen. May be involved in redox reactions associated with the formation of disulfide bonds. May contribute to the quality control of protein folding in the endoplasmic reticulum. May regulate protein folding by enhancing the catalytic activity of UGGT1/UGCGL1 and UGGT2/UGCGL2. This Sus scrofa (Pig) protein is Selenoprotein F.